We begin with the raw amino-acid sequence, 396 residues long: MIISAASDYRAAAQRTLPPFLFHYIDGGAYAEYTLRRNVEDLSQVALRQRVLKNMSDLSLETTLFNETLSMPVALAPVGLCGMYARRGEVQAAAAADAKGIPFTLSTVSVCPIEEVAPTIKRPMWFQLYVLRDRGFMRNALERAKAAGCSTLVFTVDMPTPGARYRDAHSGMSGPNAAMRRYWQAVMHPKWAWDVGLNGRPHDLGNISAYLGKPTGLEDYIGWLANNFDPSISWKDLEWIREFWDGPMVIKGILDPEDARDAVRFGADGIVVSNHGGRQLDGVLSSARALPAIADAVKGDIAILADSGIRNGLDVVRMIALGADTVLLGRAYLYALATAGKAGVANLLDLIEKEMKVAMTLTGAKSISEISGDSLVQELGKSLPTALAPMSKGDAA.

One can recognise an FMN hydroxy acid dehydrogenase domain in the interval 1-380; sequence MIISAASDYR…SGDSLVQELG (380 aa). Substrate is bound at residue Y24. S106 and Q127 together coordinate FMN. Y129 contacts substrate. T155 contacts FMN. R164 serves as a coordination point for substrate. K251 serves as a coordination point for FMN. Catalysis depends on H275, which acts as the Proton acceptor. A substrate-binding site is contributed by R278. 306–330 is an FMN binding site; the sequence is DSGIRNGLDVVRMIALGADTVLLGR.

The protein belongs to the FMN-dependent alpha-hydroxy acid dehydrogenase family. The cofactor is FMN.

It is found in the cell inner membrane. The enzyme catalyses (S)-lactate + A = pyruvate + AH2. Its function is as follows. Catalyzes the conversion of L-lactate to pyruvate. Is coupled to the respiratory chain. This is L-lactate dehydrogenase from Salmonella paratyphi B (strain ATCC BAA-1250 / SPB7).